The following is a 474-amino-acid chain: GTPase Der (474 aa).

2 consecutive EngA-type G domains span residues 2–166 (LRIA…NVPE) and 212–385 (LKIA…ETVS). Residues 8 to 15 (GRPNVGKS), 55 to 59 (DTGGV), 118 to 121 (NKAD), 218 to 225 (GRPNVGKS), 265 to 269 (DTAGL), and 330 to 333 (NKWD) contribute to the GTP site. Positions 386-470 (SKVPTPVVNK…PFDLEFKEKT (85 aa)) constitute a KH-like domain.

The protein belongs to the TRAFAC class TrmE-Era-EngA-EngB-Septin-like GTPase superfamily. EngA (Der) GTPase family. Associates with the 50S ribosomal subunit.

Functionally, GTPase that plays an essential role in the late steps of ribosome biogenesis. This chain is GTPase Der, found in Chlamydia caviae (strain ATCC VR-813 / DSM 19441 / 03DC25 / GPIC) (Chlamydophila caviae).